Consider the following 98-residue polypeptide: UPF0235 protein Pmen_4153 (98 aa).

Belongs to the UPF0235 family.

The sequence is that of UPF0235 protein Pmen_4153 from Ectopseudomonas mendocina (strain ymp) (Pseudomonas mendocina).